A 356-amino-acid polypeptide reads, in one-letter code: Non-functional pseudokinase ZRK15 (356 aa).

In terms of domain architecture, Protein kinase spans 62 to 356 (NRVSELFDEI…SSSSCGETSL (295 aa)). ATP contacts are provided by residues 68–76 (FDEIPYDWY) and lysine 94.

This sequence belongs to the protein kinase superfamily. Ser/Thr protein kinase family. ZRK subfamily. Interacts with RPP13L4/ZAR1.

The polypeptide is Non-functional pseudokinase ZRK15 (Arabidopsis thaliana (Mouse-ear cress)).